We begin with the raw amino-acid sequence, 291 residues long: MLRREARLRREYLYRKAREEAQRSAQERKERLRRALEENRLIPTELRREALALQGSLEFDDAGGEGVTSHVDDEYRWAGVEDPKVMITTSRDPSSRLKMFAKELKLVFPGAQRMNRGRHEVGALVRACKANGVTDLLVVHEHRGTPVGLIVSHLPFGPTAYFTLCNVVMRHDIPDLGTMSEAKPHLITHGFSSRLGKRVSDILRYLFPVPKDDSHRVITFANQDDYISFRHHVYKKTDHRNVELTEVGPRFELKLYMIRLGTLEQEATADVEWRWHPYTNTARKRVFLSAE.

The 182-residue stretch at 83–264 (PKVMITTSRD…LYMIRLGTLE (182 aa)) folds into the Brix domain.

As to quaternary structure, part of the small subunit (SSU) processome, composed of more than 70 proteins and the RNA chaperone small nucleolar RNA (snoRNA) U3. Component of a heterotrimeric complex containing IMP3, IMP4 and MPHOSPH10. Interacts with MPHOSPH10.

The protein localises to the nucleus. It is found in the nucleolus. Functionally, component of the 60-80S U3 small nucleolar ribonucleoprotein (U3 snoRNP). Required for the early cleavages during pre-18S ribosomal RNA processing. Part of the small subunit (SSU) processome, first precursor of the small eukaryotic ribosomal subunit. During the assembly of the SSU processome in the nucleolus, many ribosome biogenesis factors, an RNA chaperone and ribosomal proteins associate with the nascent pre-rRNA and work in concert to generate RNA folding, modifications, rearrangements and cleavage as well as targeted degradation of pre-ribosomal RNA by the RNA exosome. The sequence is that of U3 small nucleolar ribonucleoprotein protein IMP4 (IMP4) from Pongo abelii (Sumatran orangutan).